The sequence spans 397 residues: Pectate lyase 4 (397 aa).

An N-terminal signal peptide occupies residues 1-25 (MGIKHCCYILYFTLALVTLVQAGRL). Asparagine 36 carries N-linked (GlcNAc...) asparagine glycosylation. Cysteine 54 and cysteine 71 are disulfide-bonded. 3 PbH1 repeats span residues 159–202 (VKNV…HVTG), 203–224 (SSDI…VDVN), and 227–248 (STGV…LLGA). Aspartate 194, aspartate 218, and aspartate 222 together coordinate Ca(2+). Arginine 274 is a catalytic residue.

Belongs to the polysaccharide lyase 1 family. Amb a subfamily. Monomer. Ca(2+) serves as cofactor. The N-terminus is blocked. In terms of tissue distribution, pollen and flowers.

The enzyme catalyses Eliminative cleavage of (1-&gt;4)-alpha-D-galacturonan to give oligosaccharides with 4-deoxy-alpha-D-galact-4-enuronosyl groups at their non-reducing ends.. The protein operates within glycan metabolism; pectin degradation; 2-dehydro-3-deoxy-D-gluconate from pectin: step 2/5. Functionally, has pectate lyase activity. This is Pectate lyase 4 from Ambrosia artemisiifolia (Common ragweed).